We begin with the raw amino-acid sequence, 299 residues long: MSEKETPSPVLDVKKEKNEETGIDEEKSSEDDCSKRSKVKSNPSKFSVNSILSPLESLVRVQQQLLKMAASKSGTPGTNAGVPGAFPYGPGRLPGNYFAGPFPGYSGAQPNWYNGNDPRFAAAAALLPCSIDPVRSAINHQFSMSSMSQRRKRRVLFSQAQVYELERRFKQAKYLTAPEREQLANSIRLTPTQVKIWFQNHRYKCKRQEKEKAMSGLGHSEDGSSPPPDNDDDDDKYSIEMDDKDDEEEEESEKPVLKPSGVFGLPYPPNAAAAAAAAAAAFNFPFAAQGPNPAYYMRW.

Positions 1 to 35 (MSEKETPSPVLDVKKEKNEETGIDEEKSSEDDCSK) are enriched in basic and acidic residues. Disordered regions lie at residues 1 to 45 (MSEK…NPSK) and 208 to 263 (QEKE…SGVF). The segment at residues 150–209 (RRKRRVLFSQAQVYELERRFKQAKYLTAPEREQLANSIRLTPTQVKIWFQNHRYKCKRQE) is a DNA-binding region (homeobox). The segment covering 242–252 (DDKDDEEEEES) has biased composition (acidic residues).

Belongs to the NK-2 homeobox family. Expressed in the 8 vulval muscles, 8-10 ventral neurons in the head and in the most posterior pharyngeal muscle cell, m8. Expressed in SIA, SIB and SMB sublateral motor neurons, and in muscles of the pharynx and vulva.

The protein localises to the nucleus. In terms of biological role, probable transcriptional regulator that is required in neural development for the normal formation of sublateral cholinergic motor neuron processes. Plays a role in regulating the expression of acetylcholine transporter protein unc-17 in the sublateral processes. In particular, it is required in sublateral motor neurons for a left-right turning behavior that occurs during the lethargus phase of the normal sleep process called 'flipping'. During 'flipping' animals rotate 180 degrees about their longitudinal axis. The protein is Homeobox protein ceh-24 of Caenorhabditis elegans.